A 181-amino-acid polypeptide reads, in one-letter code: Adenine phosphoribosyltransferase (181 aa).

Belongs to the purine/pyrimidine phosphoribosyltransferase family. In terms of assembly, homodimer.

The protein resides in the cytoplasm. The catalysed reaction is AMP + diphosphate = 5-phospho-alpha-D-ribose 1-diphosphate + adenine. Its pathway is purine metabolism; AMP biosynthesis via salvage pathway; AMP from adenine: step 1/1. In terms of biological role, catalyzes a salvage reaction resulting in the formation of AMP, that is energically less costly than de novo synthesis. This Methylobacterium radiotolerans (strain ATCC 27329 / DSM 1819 / JCM 2831 / NBRC 15690 / NCIMB 10815 / 0-1) protein is Adenine phosphoribosyltransferase.